We begin with the raw amino-acid sequence, 148 residues long: FAD synthase (148 aa).

ATP is bound by residues 11–12 (TF), 16–19 (HPGH), Asn94, and Tyr121.

This sequence belongs to the archaeal FAD synthase family. In terms of assembly, homodimer. A divalent metal cation is required as a cofactor.

It carries out the reaction FMN + ATP + H(+) = FAD + diphosphate. Its pathway is cofactor biosynthesis; FAD biosynthesis; FAD from FMN: step 1/1. In terms of biological role, catalyzes the transfer of the AMP portion of ATP to flavin mononucleotide (FMN) to produce flavin adenine dinucleotide (FAD) coenzyme. In Methanoregula boonei (strain DSM 21154 / JCM 14090 / 6A8), this protein is FAD synthase.